We begin with the raw amino-acid sequence, 183 residues long: Bifunctional protein PyrR (183 aa).

Residues 102–114 (VVLVDDVLYTGRT) carry the PRPP-binding motif.

This sequence belongs to the purine/pyrimidine phosphoribosyltransferase family. PyrR subfamily. Homodimer and homohexamer; in equilibrium.

The enzyme catalyses UMP + diphosphate = 5-phospho-alpha-D-ribose 1-diphosphate + uracil. Regulates transcriptional attenuation of the pyrimidine nucleotide (pyr) operon by binding in a uridine-dependent manner to specific sites on pyr mRNA. This disrupts an antiterminator hairpin in the RNA and favors formation of a downstream transcription terminator, leading to a reduced expression of downstream genes. Functionally, also displays a weak uracil phosphoribosyltransferase activity which is not physiologically significant. This is Bifunctional protein PyrR from Listeria monocytogenes serotype 4a (strain HCC23).